Reading from the N-terminus, the 293-residue chain is Glycine betaine-binding protein OpuAC (293 aa).

An N-terminal signal peptide occupies residues 1–20; that stretch reads MLKKIIGIGVSAMLALSLAA. Residue Cys21 is the site of N-palmitoyl cysteine attachment. Cys21 carries S-diacylglycerol cysteine lipidation.

As to quaternary structure, the complex is composed of two ATP-binding proteins (OpuAA), two transmembrane proteins (OpuAB) and a solute-binding protein (OpuAC). Interacts with FloT.

The protein resides in the cell membrane. It localises to the membrane raft. Involved in a multicomponent binding-protein-dependent transport system for glycine betaine. The polypeptide is Glycine betaine-binding protein OpuAC (opuAC) (Bacillus subtilis (strain 168)).